The following is a 520-amino-acid chain: Cholesterol side-chain cleavage enzyme, mitochondrial (520 aa).

The N-terminal 36 residues, 1-36 (MLAKGLSLRSVLAKGCQPFLSPTWQSSVLATGGGAN), are a transit peptide targeting the mitochondrion. Cys458 provides a ligand contact to heme.

Belongs to the cytochrome P450 family. In terms of assembly, interacts with FDX1/adrenodoxin. Requires heme as cofactor.

Its subcellular location is the mitochondrion inner membrane. It carries out the reaction 6 reduced [adrenodoxin] + cholesterol + 3 O2 + 6 H(+) = 4-methylpentanal + pregnenolone + 6 oxidized [adrenodoxin] + 4 H2O. The enzyme catalyses 2 reduced [adrenodoxin] + cholesterol + O2 + 2 H(+) = (22R)-hydroxycholesterol + 2 oxidized [adrenodoxin] + H2O. The catalysed reaction is (22R)-hydroxycholesterol + 2 reduced [adrenodoxin] + O2 + 2 H(+) = (20R,22R)-20,22-dihydroxycholesterol + 2 oxidized [adrenodoxin] + H2O. It catalyses the reaction (20R,22R)-20,22-dihydroxycholesterol + 2 reduced [adrenodoxin] + O2 + 2 H(+) = 4-methylpentanal + pregnenolone + 2 oxidized [adrenodoxin] + 2 H2O. Its pathway is lipid metabolism; C21-steroid hormone metabolism. It participates in steroid metabolism; cholesterol metabolism. In terms of biological role, a cytochrome P450 monooxygenase that catalyzes the side-chain hydroxylation and cleavage of cholesterol to pregnenolone, the precursor of most steroid hormones. Catalyzes three sequential oxidation reactions of cholesterol, namely the hydroxylation at C22 followed with the hydroxylation at C20 to yield 20R,22R-hydroxycholesterol that is further cleaved between C20 and C22 to yield the C21-steroid pregnenolone and 4-methylpentanal. Mechanistically, uses molecular oxygen inserting one oxygen atom into a substrate and reducing the second into a water molecule. Two electrons are provided by NADPH via a two-protein mitochondrial transfer system comprising flavoprotein FDXR (adrenodoxin/ferredoxin reductase) and nonheme iron-sulfur protein FDX1 or FDX2 (adrenodoxin/ferredoxin). This is Cholesterol side-chain cleavage enzyme, mitochondrial (CYP11A1) from Mesocricetus auratus (Golden hamster).